The chain runs to 694 residues: Elongation factor G (694 aa).

The tr-type G domain maps to 6-288 (KLYRNIGIAA…GVIEYLPSPT (283 aa)). GTP is bound by residues 15–22 (AHVDAGKT), 86–90 (DTPGH), and 140–143 (NKMD).

This sequence belongs to the TRAFAC class translation factor GTPase superfamily. Classic translation factor GTPase family. EF-G/EF-2 subfamily.

It localises to the cytoplasm. Functionally, catalyzes the GTP-dependent ribosomal translocation step during translation elongation. During this step, the ribosome changes from the pre-translocational (PRE) to the post-translocational (POST) state as the newly formed A-site-bound peptidyl-tRNA and P-site-bound deacylated tRNA move to the P and E sites, respectively. Catalyzes the coordinated movement of the two tRNA molecules, the mRNA and conformational changes in the ribosome. This chain is Elongation factor G, found in Legionella pneumophila subsp. pneumophila (strain Philadelphia 1 / ATCC 33152 / DSM 7513).